The primary structure comprises 263 residues: PDZ domain-containing protein 9 (263 aa).

The 80-residue stretch at 30–109 (QTKLTVGSMG…GTILQIKVYR (80 aa)) folds into the PDZ domain.

This is PDZ domain-containing protein 9 (PDZD9) from Bos taurus (Bovine).